The sequence spans 562 residues: Glucocorticoid modulatory element-binding protein 1 (562 aa).

Ala2 bears the N-acetylalanine mark. The 85-residue stretch at 72 to 156 (ASSIEANEDM…RKMMDSGQID (85 aa)) folds into the SAND domain. Cys103 lines the Zn(2+) pocket. Residues Lys129, Lys133, Lys136, and Arg147 each contribute to the DNA site. His160, Cys164, and Cys168 together coordinate Zn(2+). The stretch at 311-357 (LDNRRKQVEHGEEQFLYTLADLERQLEEQKKQAQDPRLKSQTVQNVV) forms a coiled coil. The interval 360-384 (PVSTPKPPKRPRLQRPASTTVLSPS) is disordered. Residues 375–384 (PASTTVLSPS) are compositionally biased toward polar residues.

As to quaternary structure, homodimer, and heterodimer of GMEB1 and GMEB2. Interacts with the glucocorticoid receptor (NR3C1) and NCOA2/TIF2. May interact with HSP27 and CREB-binding protein (CBP). Interacts with TRIM63.

It is found in the nucleus. The protein localises to the cytoplasm. Trans-acting factor that binds to glucocorticoid modulatory elements (GME) present in the TAT (tyrosine aminotransferase) promoter and increases sensitivity to low concentrations of glucocorticoids. Also binds to the transferrin receptor promoter. In Rattus norvegicus (Rat), this protein is Glucocorticoid modulatory element-binding protein 1 (Gmeb1).